We begin with the raw amino-acid sequence, 2726 residues long: Filamin-C (2726 aa).

The actin-binding stretch occupies residues 1–260; it reads MMNNSNYSDA…VMTYLSQFPK (260 aa). S5 carries the post-translational modification Phosphoserine. 2 consecutive Calponin-homology (CH) domains span residues 37-143 and 160-263; these read KIQQ…LHYS and QTPK…KAKL. Filamin repeat units lie at residues 271 to 369, 371 to 469, 470 to 566, 567 to 659, 663 to 759, 760 to 862, 863 to 961, 962 to 1057, 1058 to 1150, 1151 to 1245, 1246 to 1345, 1346 to 1438, 1439 to 1534, 1535 to 1631, and 1636 to 1735; these read SKQL…EVNV, MALG…PVHV, AEAC…EVQV, SPEA…IAHI, PPDC…RVNV, GEGS…HIKV, DPSH…VVNV, APPL…AVEG, VLPP…KATI, QPVF…RVHV, QPAV…RVGV, TEGC…RVPV, KDVV…KIKV, LPSH…RIHA, and DASK…HVLA. Position 1003 is an omega-N-methylarginine (R1003). Phosphoserine is present on residues S1162 and S1339. The hinge 1 stretch occupies residues 1736-1759; it reads CDPLPHVEEPAEMLQMRQPYAPLR. Filamin repeat units follow at residues 1760 to 1855, 1856 to 1947, 1948 to 2034, and 2037 to 2129; these read PGTC…QFYV, DAIN…TAKI, TGDD…KILV, and SEIG…TVKV. S2043 carries the post-translational modification Phosphoserine. The intradomain insert; mediate targeting to Z lines stretch occupies residues 2163–2244; the sequence is GNWFQMVSAQ…FGSITRQQEG (82 aa). Over residues 2193 to 2210 the composition is skewed to basic and acidic residues; that stretch reads EISKTRGGETKREVRVEE. A disordered region spans residues 2193-2214; it reads EISKTRGGETKREVRVEESTQV. Residues 2212 to 2307 form a Filamin 20; mediates interaction with XIRP1 repeat; sequence TQVGGDPFPA…VPGSPFQFTV (96 aa). S2234 and S2237 each carry phosphoserine. At T2239 the chain carries Phosphothreonine. The segment covering 2241–2260 has biased composition (polar residues); it reads QQEGEASSQDMTAQVTSPSG. Residues 2241 to 2261 form a disordered region; sequence QQEGEASSQDMTAQVTSPSGK. 3 Filamin repeats span residues 2310 to 2402, 2404 to 2497, and 2501 to 2593; these read LGEG…VVPV, SLSD…KIRV, and SQAG…KAKV. Positions 2404–2725 are interaction with INPPL1; that stretch reads SLSDDARRLT…VPGSPFKVNV (322 aa). Phosphoserine occurs at positions 2587, 2618, 2621, 2633, 2715, and 2719. Residues 2594–2630 form a hinge 2 region; it reads TGPRLSGGHSLHETSTVLVETVTKSSSSRGASYSSIP. Residues 2594-2726 are self-association site, tail; that stretch reads TGPRLSGGHS…PGSPFKVNVP (133 aa). The stretch at 2631–2725 is one Filamin 24 repeat; that stretch reads KFSSDASKVV…VPGSPFKVNV (95 aa).

It belongs to the filamin family. Homodimer; the filamin repeat 24 and the second hinge domain are important for dimer formation. Interacts with FLNB, INPPL1, ITGB1A, KCND2, MYOT, MYOZ1 and MYOZ3. Interacts with sarcoglycans SGCD and SGCG. Interacts (via filament repeats 17-18, 20-21 and 24) with USP25 (isoform USP25m only). Interacts with FBLIM1. Interacts with XIRP1; this interaction is mediated by filamin 20 repeat. Interacts with KY. Interacts with IGFN1. Interacts with MICALL2. Interacts with ANK3. Interacts with MICALL2. Interacts with ANK3. Interacts with SYNPO2. In terms of processing, ubiquitinated by FBXL22, leading to proteasomal degradation.

It localises to the cytoplasm. The protein localises to the membrane. It is found in the cytoskeleton. The protein resides in the myofibril. Its subcellular location is the sarcomere. It localises to the z line. Its function is as follows. Muscle-specific filamin, which plays a central role in sarcomere assembly and organization. Critical for normal myogenesis, it probably functions as a large actin-cross-linking protein with structural functions at the Z lines in muscle cells. May be involved in reorganizing the actin cytoskeleton in response to signaling events. The sequence is that of Filamin-C (Flnc) from Mus musculus (Mouse).